The following is a 228-amino-acid chain: Vesicle transport protein SEC20 (228 aa).

Residues 1-199 are Cytoplasmic-facing; it reads MAAPQDVHVR…LITKYNRREL (199 aa). The stretch at 37 to 90 forms a coiled coil; it reads LSELTELNTKVKEKFQQLKHRIQELEQSAKEQDKESEKQLLLQEVENHKKQMLS. A helical; Anchor for type IV membrane protein transmembrane segment spans residues 200–220; it reads TDKLLIFLALALFLATVLYIV. Residues 221 to 228 lie on the Lumenal side of the membrane; sequence KKRLFPFL.

It belongs to the SEC20 family. In terms of assembly, component of a SNARE complex consisting of STX18, USE1L, BNIP1/SEC20L and SEC22B. Interacts directly with STX18, RINT1/TIP20L and NAPA. Interacts with ZW10 through RINT1. Interacts with BCL2. Interacts with RNF186. Interacts with RNF185. Interacts with SQSTM1; increased by 'Lys-63'-linked polyubiquitination of BNIP1. In terms of processing, polyubiquitinated. 'Lys-63'-linked polyubiquitination by RNF185 increases the interaction with the autophagy receptor SQSTM1. Undergoes 'Lys-29'- and 'Lys-63'-linked polyubiquitination by RNF186 that may regulate BNIP1 localization to the mitochondrion.

The protein resides in the endoplasmic reticulum membrane. It localises to the mitochondrion membrane. Functionally, as part of a SNARE complex may be involved in endoplasmic reticulum membranes fusion and be required for the maintenance of endoplasmic reticulum organization. Also plays a role in apoptosis. It is for instance required for endoplasmic reticulum stress-induced apoptosis. As a substrate of RNF185 interacting with SQSTM1, might also be involved in mitochondrial autophagy. The chain is Vesicle transport protein SEC20 from Rattus norvegicus (Rat).